The primary structure comprises 203 residues: MDPVIIGIGGPVGAGKTQLVERLTRAMSEEISMAAITNDIYTIEDAKILSRTSVLPEERIVGIETGGCPHTAIREDTSMNEAAIEQLKARFPDLQVIFVESGGDNLSATFSPELVDFSIYIIDVAQGEKIPRKAGQGMIKSDLFIVNKTDLAPYVGADLSVMESDSKVFRKDRPFAFTNLKTDEGLDVVMDWIRNDVLMADLG.

10–17 (GPVGAGKT) contributes to the GTP binding site.

It belongs to the SIMIBI class G3E GTPase family. UreG subfamily. Homodimer. UreD, UreF and UreG form a complex that acts as a GTP-hydrolysis-dependent molecular chaperone, activating the urease apoprotein by helping to assemble the nickel containing metallocenter of UreC. The UreE protein probably delivers the nickel.

The protein resides in the cytoplasm. Facilitates the functional incorporation of the urease nickel metallocenter. This process requires GTP hydrolysis, probably effectuated by UreG. In Micrococcus luteus (strain ATCC 4698 / DSM 20030 / JCM 1464 / CCM 169 / CCUG 5858 / IAM 1056 / NBRC 3333 / NCIMB 9278 / NCTC 2665 / VKM Ac-2230) (Micrococcus lysodeikticus), this protein is Urease accessory protein UreG.